A 132-amino-acid polypeptide reads, in one-letter code: Histone H2B.9 (132 aa).

Basic and acidic residues predominate over residues 1–11; it reads MAPKAEKKPAE. Residues 1–41 are disordered; sequence MAPKAEKKPAEKAPAPKAEKKIAKEGGTSEIVKKKKKTKKS. Residue A2 is modified to N,N,N-trimethylalanine; alternate. Position 2 is a n,N-dimethylalanine; alternate (A2). N-methylalanine; alternate is present on A2. K4 is subject to N6-methyllysine. N6-acetyllysine occurs at positions 7, 12, 20, and 21. K128 is covalently cross-linked (Glycyl lysine isopeptide (Lys-Gly) (interchain with G-Cter in ubiquitin)).

It belongs to the histone H2B family. As to quaternary structure, the nucleosome is a histone octamer containing two molecules each of H2A, H2B, H3 and H4 assembled in one H3-H4 heterotetramer and two H2A-H2B heterodimers. The octamer wraps approximately 147 bp of DNA. Can be acetylated to form H2BK6ac, H2BK33ac and H2BK34ac. Post-translationally, monoubiquitinated by BRE1 to form H2BK143ub1 and deubiquitinated by UBP26. Required for heterochromatic histone H3 di- and trimethylation at H3K4me. May give a specific tag for epigenetic transcriptional activation.

The protein localises to the nucleus. It localises to the chromosome. Functionally, core component of nucleosome. Nucleosomes wrap and compact DNA into chromatin, limiting DNA accessibility to the cellular machineries which require DNA as a template. Histones thereby play a central role in transcription regulation, DNA repair, DNA replication and chromosomal stability. DNA accessibility is regulated via a complex set of post-translational modifications of histones, also called histone code, and nucleosome remodeling. In Arabidopsis thaliana (Mouse-ear cress), this protein is Histone H2B.9.